Reading from the N-terminus, the 184-residue chain is Ribosome-recycling factor (184 aa).

It belongs to the RRF family.

It localises to the cytoplasm. In terms of biological role, responsible for the release of ribosomes from messenger RNA at the termination of protein biosynthesis. May increase the efficiency of translation by recycling ribosomes from one round of translation to another. This is Ribosome-recycling factor from Clostridium botulinum (strain ATCC 19397 / Type A).